The chain runs to 145 residues: D-aminoacyl-tRNA deacylase (145 aa).

The short motif at 137 to 138 (GP) is the Gly-cisPro motif, important for rejection of L-amino acids element.

Belongs to the DTD family. In terms of assembly, homodimer.

It is found in the cytoplasm. The enzyme catalyses glycyl-tRNA(Ala) + H2O = tRNA(Ala) + glycine + H(+). The catalysed reaction is a D-aminoacyl-tRNA + H2O = a tRNA + a D-alpha-amino acid + H(+). Its function is as follows. An aminoacyl-tRNA editing enzyme that deacylates mischarged D-aminoacyl-tRNAs. Also deacylates mischarged glycyl-tRNA(Ala), protecting cells against glycine mischarging by AlaRS. Acts via tRNA-based rather than protein-based catalysis; rejects L-amino acids rather than detecting D-amino acids in the active site. By recycling D-aminoacyl-tRNA to D-amino acids and free tRNA molecules, this enzyme counteracts the toxicity associated with the formation of D-aminoacyl-tRNA entities in vivo and helps enforce protein L-homochirality. The sequence is that of D-aminoacyl-tRNA deacylase from Pectobacterium carotovorum subsp. carotovorum (strain PC1).